The sequence spans 320 residues: 3-ketodihydrosphingosine reductase TSC10 (320 aa).

At 1–254 the chain is on the cytoplasmic side; sequence MKFTLEDQVV…IIAKSLARGD (254 aa). Leu-11 lines the NADP(+) pocket. NADPH contacts are provided by Gly-14, Ser-16, and Gly-18. A GXSXG motif is present at residues 14 to 18; sequence GGSQG. Leu-19 serves as a coordination point for NADP(+). 4 residues coordinate NADPH: Arg-41, Arg-45, Asp-89, and Leu-90. Asp-89 contacts NADP(+). Ser-166 functions as the Proton donor in the catalytic mechanism. NADP(+) contacts are provided by Tyr-180, Lys-184, and Ser-213. Catalysis depends on Tyr-180, which acts as the Proton acceptor. Lys-184 functions as the Lowers pKa of active site Tyr in the catalytic mechanism. Residues 255–275 traverse the membrane as a helical segment; the sequence is DDVFTDFVGWMIMGMDLGLTA. Residues 276 to 279 are Lumenal-facing; the sequence is KKSR. A helical transmembrane segment spans residues 280-300; the sequence is FVPLQWIFGVLSNILVVPFYM. Over 301–320 the chain is Cytoplasmic; that stretch reads VGCSWYIRKWFRENDGKKAN.

It belongs to the short-chain dehydrogenases/reductases (SDR) family. As to quaternary structure, dimer or tetramer.

The protein resides in the endoplasmic reticulum membrane. The catalysed reaction is sphinganine + NADP(+) = 3-oxosphinganine + NADPH + H(+). The protein operates within lipid metabolism; sphingolipid metabolism. In terms of biological role, catalyzes the reduction of 3'-oxosphinganine (3-ketodihydrosphingosine/KDS) to sphinganine (dihydrosphingosine/DHS), the second step of de novo sphingolipid biosynthesis. The protein is 3-ketodihydrosphingosine reductase TSC10 of Saccharomyces cerevisiae (strain ATCC 204508 / S288c) (Baker's yeast).